The primary structure comprises 357 residues: Alanine racemase (357 aa).

Lys35 functions as the Proton acceptor; specific for D-alanine in the catalytic mechanism. N6-(pyridoxal phosphate)lysine is present on Lys35. A substrate-binding site is contributed by Arg130. The Proton acceptor; specific for L-alanine role is filled by Tyr253. Met302 lines the substrate pocket.

The protein belongs to the alanine racemase family. It depends on pyridoxal 5'-phosphate as a cofactor.

It carries out the reaction L-alanine = D-alanine. Its pathway is amino-acid biosynthesis; D-alanine biosynthesis; D-alanine from L-alanine: step 1/1. Functionally, catalyzes the interconversion of L-alanine and D-alanine. May also act on other amino acids. This Wigglesworthia glossinidia brevipalpis protein is Alanine racemase (alr).